A 150-amino-acid chain; its full sequence is Cytochrome c oxidase subunit 5A, mitochondrial (150 aa).

The N-terminal 41 residues, 1–41 (MLGAALRRCAVAATTWAGPRGLLHSARTPGPAAAIQSVRCY), are a transit peptide targeting the mitochondrion. Positions 2 to 20 (LGAALRRCAVAATTWAGPR) match the SIFI-degron motif. 2 positions are modified to N6-acetyllysine: Lys-87 and Lys-113. Thr-141 carries the phosphothreonine modification.

The protein belongs to the cytochrome c oxidase subunit 5A family. As to quaternary structure, component of the cytochrome c oxidase (complex IV, CIV), a multisubunit enzyme composed of 14 subunits. The complex is composed of a catalytic core of 3 subunits MT-CO1, MT-CO2 and MT-CO3, encoded in the mitochondrial DNA, and 11 supernumerary subunits COX4I, COX5A, COX5B, COX6A, COX6B, COX6C, COX7A, COX7B, COX7C, COX8 and NDUFA4, which are encoded in the nuclear genome. The complex exists as a monomer or a dimer and forms supercomplexes (SCs) in the inner mitochondrial membrane with NADH-ubiquinone oxidoreductase (complex I, CI) and ubiquinol-cytochrome c oxidoreductase (cytochrome b-c1 complex, complex III, CIII), resulting in different assemblies (supercomplex SCI(1)III(2)IV(1) and megacomplex MCI(2)III(2)IV(2)). Interacts with AFG1L. Interacts with RAB5IF. In terms of processing, in response to mitochondrial stress, the precursor protein is ubiquitinated by the SIFI complex in the cytoplasm before mitochondrial import, leading to its degradation. Within the SIFI complex, UBR4 initiates ubiquitin chain that are further elongated or branched by KCMF1.

The protein localises to the mitochondrion inner membrane. It functions in the pathway energy metabolism; oxidative phosphorylation. In terms of biological role, component of the cytochrome c oxidase, the last enzyme in the mitochondrial electron transport chain which drives oxidative phosphorylation. The respiratory chain contains 3 multisubunit complexes succinate dehydrogenase (complex II, CII), ubiquinol-cytochrome c oxidoreductase (cytochrome b-c1 complex, complex III, CIII) and cytochrome c oxidase (complex IV, CIV), that cooperate to transfer electrons derived from NADH and succinate to molecular oxygen, creating an electrochemical gradient over the inner membrane that drives transmembrane transport and the ATP synthase. Cytochrome c oxidase is the component of the respiratory chain that catalyzes the reduction of oxygen to water. Electrons originating from reduced cytochrome c in the intermembrane space (IMS) are transferred via the dinuclear copper A center (CU(A)) of subunit 2 and heme A of subunit 1 to the active site in subunit 1, a binuclear center (BNC) formed by heme A3 and copper B (CU(B)). The BNC reduces molecular oxygen to 2 water molecules using 4 electrons from cytochrome c in the IMS and 4 protons from the mitochondrial matrix. This is Cytochrome c oxidase subunit 5A, mitochondrial (COX5A) from Macaca mulatta (Rhesus macaque).